The primary structure comprises 738 residues: MDPFFLNTQHVELLVSGKQSSPQDLLGIVSESLNQDRIVLFRPGAETVFVELRGKIQQAESHHSGIFSLPVMKGISPQDYRVYHQNGLLAHDPYAFPLLWGEIDSFLFHEGTHQRIYERMGAIPCEIDGVPGVRFIVWAPHAQRVSVIGDFNGWHGLVNPLHKVSDQGVWELFVPGLTAGACYKWEMVTESGQVLIKSDPYGKFFGPPPRSVSVVIDDSYEWNDSEWLEERIKKTEGPMNIYEVHVGSWQWQEGQPLNYKELADQLALYCKQMHYTHVELLPVTEHPLNESWGYQTTGYYAPTSRYGSFEDLQYFIDTMHQHGIGVILDWVPGHFPIDSFAMSGFDGTPLYEYTRNPSPLHPHWHTYTFDYAKPEVCNFLLGSALFWIDKMHVDGIRVDAVSSMLYLDYGRYAGEWVPNRYGGRENLDAIRFLQQFNTVIHEKYPGVLTFAEESTTFPKITVSVEEGGLGFDYKWNMGWMHDTLHYFEKDFPYRPYHQSDLTFPQWYAFSERFLLPFSHDEVVHGKRSLIGKMPGDAWRQFAQLRLLLGYQICQPGKKLLFMGGEFGQGREWSPGRELDWELLDISYHQGVHLCSQELNALYVQSPQLWQADHLPSSFRWVDFSDVRNGVVAYLRFADADAKKALLCVHHFGVGYFPHYLLPILPLESCDLLMNTDDTRFGGSGKGFREPEILTPEIARQEREAAGLIEADDESGPDCWGLDIELPPSATLIFSVTLQ.

Residue aspartate 399 is the Nucleophile of the active site. The Proton donor role is filled by glutamate 452.

It belongs to the glycosyl hydrolase 13 family. GlgB subfamily. Monomer.

The enzyme catalyses Transfers a segment of a (1-&gt;4)-alpha-D-glucan chain to a primary hydroxy group in a similar glucan chain.. It functions in the pathway glycan biosynthesis; glycogen biosynthesis. Its function is as follows. Catalyzes the formation of the alpha-1,6-glucosidic linkages in glycogen by scission of a 1,4-alpha-linked oligosaccharide from growing alpha-1,4-glucan chains and the subsequent attachment of the oligosaccharide to the alpha-1,6 position. The chain is 1,4-alpha-glucan branching enzyme GlgB from Chlamydia trachomatis serovar L2b (strain UCH-1/proctitis).